A 620-amino-acid chain; its full sequence is LysM domain receptor-like kinase 3 (620 aa).

Positions 1 to 23 (MNLKNGLLLFILFLDCVFFKVES) are cleaved as a signal peptide. The Extracellular portion of the chain corresponds to 24 to 231 (KCVKGCDVAL…YSRTGIAKGS (208 aa)). 3 disulfides stabilise this stretch: cysteine 25–cysteine 92, cysteine 29–cysteine 154, and cysteine 90–cysteine 152. N-linked (GlcNAc...) asparagine glycosylation occurs at asparagine 46. Residues 46–72 (NISNFMQSKIVLTNSFDVIMSYNRDVV) enclose the LysM 1; degenerate domain. LysM domains lie at 102 to 148 (FEYT…KINV) and 167 to 210 (VTYP…VFIP). Residues 108–114 (EGDDYDL) and 136–142 (DPNHIPV) contribute to the chitin site. N-linked (GlcNAc...) asparagine glycans are attached at residues asparagine 147 and asparagine 199. The chain crosses the membrane as a helical span at residues 232–252 (AVGIAMAGIFGLLLFVIYIYA). Topologically, residues 253 to 620 (KYFQKKEEEK…QSLINLLSTR (368 aa)) are cytoplasmic. A compositionally biased stretch (polar residues) spans 265–278 (LPQTSRAFSTQDAS). The interval 265-292 (LPQTSRAFSTQDASGSAEYETSGSSGHA) is disordered. Phosphoserine is present on residues serine 269 and serine 273. The Protein kinase domain occupies 322–595 (FSLDNKIGQG…RSIVVALMTL (274 aa)). Residues 328 to 336 (IGQGGFGAV) and lysine 349 each bind ATP. Aspartate 441 functions as the Proton acceptor in the catalytic mechanism.

Belongs to the protein kinase superfamily. Ser/Thr protein kinase family. In terms of assembly, forms homodimers and homooligomers. Forms heteromeric complexes with NFP at the cell periphery in nodules. Interacts with PUB1. Autophosphorylated. As to expression, expressed in the epidermal and root hair cells of the developing root hair zone during nonsymbiotic growth. Accumulates in roots and nodules during symbiotic growth with rhizobia. Localized at the cell periphery in a narrow zone of about two cell layers (e.g. L1/L2 zone) at the nodule apex upon infection by rhizobia, from the meristem to the infection zone (at protein level).

It localises to the cell membrane. Its subcellular location is the vacuole lumen. It carries out the reaction L-seryl-[protein] + ATP = O-phospho-L-seryl-[protein] + ADP + H(+). It catalyses the reaction L-threonyl-[protein] + ATP = O-phospho-L-threonyl-[protein] + ADP + H(+). Its function is as follows. Putative receptor for S.meliloti Nod factor signals essential for the establishment of the nitrogen-fixing, root nodule symbiosis with S.meliloti. Involved in the control of root hair curling after S.meliloti infection, probably by modulating the reorganization of the microtubular cytoskeleton in epidermal and cortical cells. Regulates a subset of Nod factor-induced genes. This chain is LysM domain receptor-like kinase 3, found in Medicago truncatula (Barrel medic).